The primary structure comprises 158 residues: Transcription elongation factor GreA (158 aa).

Belongs to the GreA/GreB family.

Its function is as follows. Necessary for efficient RNA polymerase transcription elongation past template-encoded arresting sites. The arresting sites in DNA have the property of trapping a certain fraction of elongating RNA polymerases that pass through, resulting in locked ternary complexes. Cleavage of the nascent transcript by cleavage factors such as GreA or GreB allows the resumption of elongation from the new 3'terminus. GreA releases sequences of 2 to 3 nucleotides. The chain is Transcription elongation factor GreA from Pelagibacter ubique (strain HTCC1062).